Here is a 143-residue protein sequence, read N- to C-terminus: AP-2 complex subunit sigma (143 aa).

It belongs to the adaptor complexes small subunit family. As to quaternary structure, adaptor protein complex 2 (AP-2) is a heterotetramer composed of two large adaptins (alpha-type subunit apl3 and beta-type subunit apl1), a medium chain (mu-type subunit apm4) and a small adaptin (sigma-type subunit aps2).

The protein resides in the cell membrane. Its subcellular location is the membrane. It localises to the coated pit. Functionally, component of the adaptor complexes which link clathrin to receptors in coated vesicles. Clathrin-associated protein complexes are believed to interact with the cytoplasmic tails of membrane proteins, leading to their selection and concentration. The protein is AP-2 complex subunit sigma (aps2) of Schizosaccharomyces pombe (strain 972 / ATCC 24843) (Fission yeast).